The chain runs to 142 residues: Mitochondrial import inner membrane translocase subunit TIM22-4 (142 aa).

A run of 4 helical transmembrane segments spans residues 21–41 (VTSGVMGGGLGLMMGLFLGAL), 70–88 (SCKTFAVMGLVFSAAECIV), 97–113 (TVNTAIAGCVTGGSMSA), and 120–137 (ACIGCAGFAIFSVLIEKF).

The protein belongs to the Tim17/Tim22/Tim23 family.

It localises to the mitochondrion inner membrane. Essential core component of the TIM22 complex, a complex that mediates the import and insertion of multi-pass transmembrane proteins into the mitochondrial inner membrane. The sequence is that of Mitochondrial import inner membrane translocase subunit TIM22-4 (TIM22-4) from Arabidopsis thaliana (Mouse-ear cress).